The following is a 384-amino-acid chain: Branched-chain-amino-acid aminotransferase 1, mitochondrial (384 aa).

A mitochondrion-targeting transit peptide spans 1 to 18; that stretch reads MALRRCLPQYSTTSSYLS. Lys231 is subject to N6-(pyridoxal phosphate)lysine.

This sequence belongs to the class-IV pyridoxal-phosphate-dependent aminotransferase family. Requires pyridoxal 5'-phosphate as cofactor.

It is found in the mitochondrion. It carries out the reaction L-leucine + 2-oxoglutarate = 4-methyl-2-oxopentanoate + L-glutamate. The catalysed reaction is L-isoleucine + 2-oxoglutarate = (S)-3-methyl-2-oxopentanoate + L-glutamate. The enzyme catalyses L-valine + 2-oxoglutarate = 3-methyl-2-oxobutanoate + L-glutamate. Its pathway is amino-acid degradation; L-leucine degradation; 4-methyl-2-oxopentanoate from L-leucine (aminotransferase route): step 1/1. The protein operates within amino-acid degradation; L-valine degradation. Its function is as follows. Converts 2-oxo acids to branched-chain amino acids. Acts on leucine, isoleucine and valine. This is Branched-chain-amino-acid aminotransferase 1, mitochondrial (BCAT1) from Arabidopsis thaliana (Mouse-ear cress).